Consider the following 290-residue polypeptide: MKSGFVSIIGRPSTGKSTLLNSICGHQISIISSTPQTTRNKIKGIFTDKRGQIIFIDTPGFHLSKKKFNIALMNNVHSAITETELILYVIDIQDEPGIEENEILTIISKSKINFLVVINKIDIQKTKEREIMIFLEKKGIKKDNIIKISAEQKINIEEIKDKIYANLQEGPLYYPEEYYTDQEMNLRTSEIIRGVTIKKLKEELPYSLYTQIEILEDRKNKLFIKANIIVAGESQKGIIVGKGGQGIKAIGEEARKIISKIFEKKCDLFLQVKLRKNWNKNSKLIKNLIN.

Positions 2–169 (KSGFVSIIGR…KDKIYANLQE (168 aa)) constitute an Era-type G domain. Residues 10–17 (GRPSTGKS) are G1. 10–17 (GRPSTGKS) contacts GTP. The G2 stretch occupies residues 36-40 (QTTRN). The segment at 57–60 (DTPG) is G3. GTP-binding positions include 57–61 (DTPGF) and 119–122 (NKID). Residues 119–122 (NKID) are G4. Residues 148-150 (ISA) are G5. The KH type-2 domain maps to 200–276 (LKEELPYSLY…DLFLQVKLRK (77 aa)).

The protein belongs to the TRAFAC class TrmE-Era-EngA-EngB-Septin-like GTPase superfamily. Era GTPase family. As to quaternary structure, monomer.

Its subcellular location is the cytoplasm. The protein localises to the cell inner membrane. In terms of biological role, an essential GTPase that binds both GDP and GTP, with rapid nucleotide exchange. Plays a role in 16S rRNA processing and 30S ribosomal subunit biogenesis and possibly also in cell cycle regulation and energy metabolism. In Borrelia hermsii (strain HS1 / DAH), this protein is GTPase Era.